A 979-amino-acid chain; its full sequence is Translation initiation factor IF-2 (979 aa).

A disordered region spans residues 33–391; that stretch reads VKSHSSTITT…TPPAEITLTE (359 aa). Low complexity-rich tracts occupy residues 54-63 and 139-150; these read QKRPQAPKAQ and AKTTSPKAEPAA. Positions 151–166 are enriched in pro residues; that stretch reads PAAPKPKLMGPPPRPT. A compositionally biased stretch (acidic residues) spans 234–252; sequence PELDEEPDTNNVEGDDDAT. Basic residues-rich tracts occupy residues 263–278 and 294–303; these read PAAK…PSKR and TKTSKLKRRP. Residues 314–328 are compositionally biased toward polar residues; sequence GTTTNNNAEVPSVSL. Residues 371 to 380 are compositionally biased toward basic and acidic residues; the sequence is KEQRRDRPDV. Residues 468–641 form the tr-type G domain; sequence HRPPVVTIMG…LLVSEIEELS (174 aa). The G1 stretch occupies residues 477 to 484; it reads GHVDHGKT. A GTP-binding site is contributed by 477-484; the sequence is GHVDHGKT. Residues 502 to 506 form a G2 region; that stretch reads GITQH. Residues 527–530 form a G3 region; the sequence is DTPG. GTP is bound by residues 527-531 and 581-584; these read DTPGH and NKMD. The segment at 581–584 is G4; it reads NKMD. Positions 617–619 are G5; that stretch reads SAL.

The protein belongs to the TRAFAC class translation factor GTPase superfamily. Classic translation factor GTPase family. IF-2 subfamily.

The protein localises to the cytoplasm. One of the essential components for the initiation of protein synthesis. Protects formylmethionyl-tRNA from spontaneous hydrolysis and promotes its binding to the 30S ribosomal subunits. Also involved in the hydrolysis of GTP during the formation of the 70S ribosomal complex. In Picosynechococcus sp. (strain ATCC 27264 / PCC 7002 / PR-6) (Agmenellum quadruplicatum), this protein is Translation initiation factor IF-2.